A 282-amino-acid polypeptide reads, in one-letter code: Cuticle collagen 8 (282 aa).

A signal peptide spans 1 to 24 (MLVCVFVALYTMMGLLTDIKQLQS). The tract at residues 86-282 (GPKSEGCPAG…CPCPGRSYKA (197 aa)) is disordered. Triple-helical region stretches follow at residues 95–124 (GPPG…PGVI) and 141–269 (GRPG…PGPD). Positions 170 to 180 (TGGQGGPGEQG) are enriched in gly residues. Pro residues predominate over residues 214–224 (PPGPRGPPGPE). The span at 225 to 234 (GNPGGAGEDG) shows a compositional bias: gly residues. Low complexity predominate over residues 235–244 (NQGPVGHPGV).

This sequence belongs to the cuticular collagen family. In terms of assembly, collagen polypeptide chains are complexed within the cuticle by disulfide bonds and other types of covalent cross-links.

In terms of biological role, nematode cuticles are composed largely of collagen-like proteins. The cuticle functions both as an exoskeleton and as a barrier to protect the worm from its environment. The chain is Cuticle collagen 8 (col-8) from Caenorhabditis elegans.